Here is a 319-residue protein sequence, read N- to C-terminus: MEAFPVIDMEKLNGEERAPTMEKIKDACENWGFFELVNHGISHELMDTVERLTKEHYNKCMEQRFKEMVATKGLEAVQSEINDLDWESTFFLRHLPVSNISEIPDLEQDHRKAMKEFAEKLEKLAEQLLDLLCENVGLEKGYLKKAFYGSKGPTFGTKVSNYPPCPRPELIKGLRAHTDAGGIILLFQDNKVSGLQLLKDGEWIDVPPMKHSIVINIGDQLEVITNGKYKSVMHRVIAQPDGNRMSIASFYNPGSDAVMYPAPALVDKEEDQQKQVYPKFVFEDYMKLYAGLKFQAKEPRFEAMKAMENAVNLGPIATI.

One can recognise a Fe2OG dioxygenase domain in the interval 153–253; it reads PTFGTKVSNY…RMSIASFYNP (101 aa). 3 residues coordinate Fe cation: His-177, Asp-179, and His-234.

It belongs to the iron/ascorbate-dependent oxidoreductase family. Fe cation serves as cofactor.

It catalyses the reaction 1-aminocyclopropane-1-carboxylate + L-ascorbate + O2 = ethene + L-dehydroascorbate + hydrogen cyanide + CO2 + 2 H2O. The protein operates within alkene biosynthesis; ethylene biosynthesis via S-adenosyl-L-methionine; ethylene from S-adenosyl-L-methionine: step 2/2. The chain is 1-aminocyclopropane-1-carboxylate oxidase (ACO) from Actinidia deliciosa (Kiwi).